Here is a 316-residue protein sequence, read N- to C-terminus: MTSLTNTIGPDVPGPALTTAGGDVPDYFALLKPRVMVLVIFTALVGMVVSQGHVQPAIGAISLLAIAVGAGASGCLNMWWDADIDAVMSRTATRPIPSGRITSEEALGFGLFLSVASVVVLGLAANLLAAALLAFTIVFYAVVYSMWLKRATAQNIVIGGAAGALPPVIGQAVVTGSIGIESLILFAIIFIWTPPHFWALALIKADEYARAGIPMMPNVAGPASTRRQIVWYSLLLAPLGLVPVALGFGGLVYAVVGLVGGLGMVAFSIRVLRNPEGDAERRAAMGMFGFSILYLFALFSALLAEQSFGLFRPVLG.

Transmembrane regions (helical) follow at residues 35–55 (VMVL…GHVQ), 56–76 (PAIG…SGCL), 119–139 (VVLG…TIVF), 156–176 (IVIG…VVTG), 183–203 (LILF…LALI), 229–246 (IVWY…PVAL), 250–272 (GLVY…IRVL), and 283–303 (AAMG…SALL).

This sequence belongs to the UbiA prenyltransferase family. Protoheme IX farnesyltransferase subfamily.

Its subcellular location is the cell inner membrane. It carries out the reaction heme b + (2E,6E)-farnesyl diphosphate + H2O = Fe(II)-heme o + diphosphate. Its pathway is porphyrin-containing compound metabolism; heme O biosynthesis; heme O from protoheme: step 1/1. Converts heme B (protoheme IX) to heme O by substitution of the vinyl group on carbon 2 of heme B porphyrin ring with a hydroxyethyl farnesyl side group. The polypeptide is Protoheme IX farnesyltransferase (Methylobacterium radiotolerans (strain ATCC 27329 / DSM 1819 / JCM 2831 / NBRC 15690 / NCIMB 10815 / 0-1)).